A 432-amino-acid polypeptide reads, in one-letter code: Eukaryotic translation initiation factor 3 subunit M (432 aa).

The region spanning glutamate 184–tyrosine 356 is the PCI domain. 2 stretches are compositionally biased toward basic and acidic residues: residues alanine 392 to valine 401 and glutamine 423 to aspartate 432. Residues alanine 392–aspartate 432 form a disordered region.

This sequence belongs to the eIF-3 subunit M family. Component of the eukaryotic translation initiation factor 3 (eIF-3) complex.

It is found in the cytoplasm. Functionally, component of the eukaryotic translation initiation factor 3 (eIF-3) complex, which is involved in protein synthesis of a specialized repertoire of mRNAs and, together with other initiation factors, stimulates binding of mRNA and methionyl-tRNAi to the 40S ribosome. The eIF-3 complex specifically targets and initiates translation of a subset of mRNAs involved in cell proliferation. The polypeptide is Eukaryotic translation initiation factor 3 subunit M (Pyricularia oryzae (strain 70-15 / ATCC MYA-4617 / FGSC 8958) (Rice blast fungus)).